Here is a 239-residue protein sequence, read N- to C-terminus: UDP-2,3-diacylglucosamine hydrolase (239 aa).

Positions 8, 10, 41, 78, and 113 each coordinate Mn(2+). 78-79 (NR) serves as a coordination point for substrate. Positions 121, 159, 163, 166, and 194 each coordinate substrate. Mn(2+)-binding residues include H194 and H196.

It belongs to the LpxH family. It depends on Mn(2+) as a cofactor.

The protein localises to the cell inner membrane. It catalyses the reaction UDP-2-N,3-O-bis[(3R)-3-hydroxytetradecanoyl]-alpha-D-glucosamine + H2O = 2-N,3-O-bis[(3R)-3-hydroxytetradecanoyl]-alpha-D-glucosaminyl 1-phosphate + UMP + 2 H(+). It participates in glycolipid biosynthesis; lipid IV(A) biosynthesis; lipid IV(A) from (3R)-3-hydroxytetradecanoyl-[acyl-carrier-protein] and UDP-N-acetyl-alpha-D-glucosamine: step 4/6. Its function is as follows. Hydrolyzes the pyrophosphate bond of UDP-2,3-diacylglucosamine to yield 2,3-diacylglucosamine 1-phosphate (lipid X) and UMP by catalyzing the attack of water at the alpha-P atom. Involved in the biosynthesis of lipid A, a phosphorylated glycolipid that anchors the lipopolysaccharide to the outer membrane of the cell. The chain is UDP-2,3-diacylglucosamine hydrolase from Shewanella sp. (strain ANA-3).